Consider the following 132-residue polypeptide: Small ribosomal subunit protein uS8 (132 aa).

The protein belongs to the universal ribosomal protein uS8 family. As to quaternary structure, part of the 30S ribosomal subunit. Contacts proteins S5 and S12.

Its function is as follows. One of the primary rRNA binding proteins, it binds directly to 16S rRNA central domain where it helps coordinate assembly of the platform of the 30S subunit. In Bradyrhizobium sp. (strain BTAi1 / ATCC BAA-1182), this protein is Small ribosomal subunit protein uS8.